We begin with the raw amino-acid sequence, 154 residues long: Deoxyuridine 5'-triphosphate nucleotidohydrolase (154 aa).

Residues 64–66 (RSG), Asn-77, 81–83 (TVD), and Lys-91 contribute to the substrate site.

It belongs to the dUTPase family. In terms of assembly, homotrimer. It depends on Mg(2+) as a cofactor.

It carries out the reaction dUTP + H2O = dUMP + diphosphate + H(+). The protein operates within pyrimidine metabolism; dUMP biosynthesis; dUMP from dCTP (dUTP route): step 2/2. Functionally, this enzyme is involved in nucleotide metabolism: it produces dUMP, the immediate precursor of thymidine nucleotides and it decreases the intracellular concentration of dUTP so that uracil cannot be incorporated into DNA. The polypeptide is Deoxyuridine 5'-triphosphate nucleotidohydrolase (Mycolicibacterium gilvum (strain PYR-GCK) (Mycobacterium gilvum (strain PYR-GCK))).